Reading from the N-terminus, the 352-residue chain is C-C chemokine receptor type 5 (352 aa).

Topologically, residues 1 to 30 (MDYQVSSPTYDIDYYTSEPCQKINVKQIAA) are extracellular. Tyr3 carries the sulfotyrosine modification. 2 O-linked (GalNAc...) serine glycosylation sites follow: Ser6 and Ser7. Sulfotyrosine occurs at positions 10, 14, and 15. Intrachain disulfides connect Cys20–Cys269 and Cys101–Cys178. A helical membrane pass occupies residues 31–58 (RLLPPLYSLVFIFGFVGNMLVILILINC). The Cytoplasmic portion of the chain corresponds to 59–68 (KRLKSMTDIY). Residues 69 to 89 (LLNLAISDLFFLLTVPFWAHY) form a helical membrane-spanning segment. The Extracellular portion of the chain corresponds to 90-102 (AAAQWDFGNTMCQ). Residues 103 to 124 (LLTGLYFIGFFSGIFFIILLTI) traverse the membrane as a helical segment. Residues 125-141 (DRYLAIVHAVFALKART) are Cytoplasmic-facing. A helical transmembrane segment spans residues 142–166 (VTFGVVTSVITWVVAVFASLPGIIF). Over 167 to 198 (TRSQKEGLHYTCSSHFPYSQYQFWKNFQTLKI) the chain is Extracellular. The helical transmembrane segment at 199–218 (VILGLVLPLLVMVICYSGIL) threads the bilayer. Topologically, residues 219–235 (KTLLRCRNEKKRHRAVR) are cytoplasmic. Residues 236 to 260 (LIFTIMIVYFLFWAPYNIVLLLNTF) form a helical membrane-spanning segment. The Extracellular portion of the chain corresponds to 261–277 (QEFFGLNNCSSSNRLDQ). Residues 278 to 301 (AMQVTETLGMTHCCINPIIYAFVG) form a helical membrane-spanning segment. Over 302–352 (EKFRNYLLVFFQKHIAKHFCKCCSIFQQEAPERASSVYTRSTGEQEISVGL) the chain is Cytoplasmic. S-palmitoyl cysteine attachment occurs at residues Cys321, Cys323, and Cys324. A phosphoserine; by BARK1 mark is found at Ser336, Ser337, Ser342, and Ser349.

It belongs to the G-protein coupled receptor 1 family. Interacts with PRAF2. Efficient ligand binding to CCL3/MIP-1alpha and CCL4/MIP-1beta requires sulfation, O-glycosylation and sialic acid modifications. Glycosylation on Ser-6 is required for efficient binding of CCL4. Interacts with GRK2. Interacts with ARRB1 and ARRB2. Interacts with CNIH4. Interacts with S100A4; this interaction stimulates T-lymphocyte chemotaxis. Sulfated on at least 2 of the N-terminal tyrosines. Sulfation is required for efficient binding of the chemokines, CCL3 and CCL4. Post-translationally, palmitoylation in the C-terminal is important for cell surface expression. In terms of processing, phosphorylation on serine residues in the C-terminal is stimulated by binding CC chemokines especially by APO-RANTES. O-glycosylated, but not N-glycosylated. Ser-6 appears to be the major site even if Ser-7 may be also O-glycosylated. Also sialylated glycans present which contribute to chemokine binding. Thr-16 and Ser-17 may also be glycosylated and, if so, with small moieties such as a T-antigen.

It localises to the cell membrane. Receptor for a number of inflammatory CC-chemokines including CCL3/MIP-1-alpha, CCL4/MIP-1-beta and RANTES and subsequently transduces a signal by increasing the intracellular calcium ion level. May play a role in the control of granulocytic lineage proliferation or differentiation. Participates in T-lymphocyte migration to the infection site by acting as a chemotactic receptor. This is C-C chemokine receptor type 5 (CCR5) from Symphalangus syndactylus (Siamang).